The chain runs to 1192 residues: Protein argonaute 13 (1192 aa).

Residues 183–296 (TVIQFVEEFL…LPMEVCKIVE (114 aa)) form the PAZ domain. The region spanning 472-770 (LLIVILLEVS…AASHAHCCIK (299 aa)) is the Piwi domain.

This sequence belongs to the argonaute family. Ago subfamily.

Probably involved in the RNA silencing pathway. May bind to short RNAs such as microRNAs (miRNAs) or short interfering RNAs (siRNAs), and represses the translation of mRNAs which are complementary to them. This Oryza sativa subsp. japonica (Rice) protein is Protein argonaute 13 (AGO13).